The chain runs to 576 residues: DNA primase (576 aa).

The CHC2-type zinc finger occupies 40-64 (CPFHNEKTPSFNVVAKKQFYHCFGC). One can recognise a Toprim domain in the interval 251 to 333 (DSIIVVEGYM…GLDAGFIFLP (83 aa)). Mg(2+) contacts are provided by Glu-257, Asp-301, and Asp-303.

The protein belongs to the DnaG primase family. In terms of assembly, monomer. Interacts with DnaB. Zn(2+) is required as a cofactor. Requires Mg(2+) as cofactor.

The enzyme catalyses ssDNA + n NTP = ssDNA/pppN(pN)n-1 hybrid + (n-1) diphosphate.. RNA polymerase that catalyzes the synthesis of short RNA molecules used as primers for DNA polymerase during DNA replication. The protein is DNA primase of Legionella pneumophila.